We begin with the raw amino-acid sequence, 138 residues long: Large ribosomal subunit protein uL16 (138 aa).

Residues 1–19 are compositionally biased toward basic residues; it reads MLIPRRVKHRKQHHPKRSG. Residues 1–24 form a disordered region; it reads MLIPRRVKHRKQHHPKRSGAAKGG.

This sequence belongs to the universal ribosomal protein uL16 family. As to quaternary structure, part of the 50S ribosomal subunit.

Its function is as follows. Binds 23S rRNA and is also seen to make contacts with the A and possibly P site tRNAs. In Micrococcus luteus (strain ATCC 4698 / DSM 20030 / JCM 1464 / CCM 169 / CCUG 5858 / IAM 1056 / NBRC 3333 / NCIMB 9278 / NCTC 2665 / VKM Ac-2230) (Micrococcus lysodeikticus), this protein is Large ribosomal subunit protein uL16.